The primary structure comprises 854 residues: Fibroblast growth factor receptor 1 (854 aa).

The signal sequence occupies residues 1-20 (MSGLFFLLSELLILLGKINS). Topologically, residues 21–383 (VSKKSLCHPE…NFFMNSVPLS (363 aa)) are extracellular. Positions 29-120 (PELFKIDNKL…SSVFFLINVT (92 aa)) constitute an Ig-like C2-type 1 domain. A disulfide bond links cysteine 50 and cysteine 102. Residues asparagine 95, asparagine 99, asparagine 110, asparagine 118, asparagine 140, asparagine 175, asparagine 202, asparagine 248, asparagine 283, asparagine 317, and asparagine 346 are each glycosylated (N-linked (GlcNAc...) asparagine). Ig-like C2-type domains follow at residues 147–259 (PEMG…FTFT) and 268–369 (PHLT…LSVI). Residues cysteine 166 and cysteine 242 are joined by a disulfide bond. A disulfide bond links cysteine 288 and cysteine 353. Residues 384–404 (IFLVIGFFVAIILLSLIIYCF) form a helical membrane-spanning segment. Residues 405 to 854 (FLQYKNAVDS…SDYLEPKCLV (450 aa)) lie on the Cytoplasmic side of the membrane. Residues 551–822 (KITNKKLGEG…EIVEILIDII (272 aa)) enclose the Protein kinase domain. ATP is bound by residues 557 to 565 (LGEGAFGMV) and lysine 585. Aspartate 689 functions as the Proton acceptor in the catalytic mechanism. At tyrosine 718 the chain carries Phosphotyrosine; by autocatalysis.

Belongs to the protein kinase superfamily. Tyr protein kinase family. Fibroblast growth factor receptor subfamily. As to expression, expressed in brain, stem cells and the mesenchymal cells.

It localises to the membrane. It carries out the reaction L-tyrosyl-[protein] + ATP = O-phospho-L-tyrosyl-[protein] + ADP + H(+). In terms of biological role, receptor for basic fibroblast growth factor. This is Fibroblast growth factor receptor 1 (FGFR1) from Dugesia japonica (Planarian).